Reading from the N-terminus, the 309-residue chain is MTQDLPTPRGRLTPDKDLSGLTWLRVGGPADWLFQPADVDDLCAFMAELDPAVPVFPMGVGSNLIVRDGGLRGVVIKLGRPFMDISVEGDRITAGAAVLDARLAKEAADAGVDLTFLRTIPGSLGGALKMNAGCYGSYVADHFVGAQAVLRDGTQVTLTRDDITFAYRQTDIPEGVTITSVTLQGNREDSRVLHTRMEEQLAKRDATQPTKALTAGSTFRNPAGFSSTGQADDTHELKAWKVIDDAGMRGATRGGAQMSEMHSNFLVNKGGATAADLEGLGEEVRKRVFQTQGIDLVWEIMRVGVPEET.

Positions 25–188 (RVGGPADWLF…TSVTLQGNRE (164 aa)) constitute an FAD-binding PCMH-type domain. R168 is a catalytic residue. A disordered region spans residues 202–231 (AKRDATQPTKALTAGSTFRNPAGFSSTGQA). Over residues 207 to 231 (TQPTKALTAGSTFRNPAGFSSTGQA) the composition is skewed to polar residues. S217 serves as the catalytic Proton donor. Residue E299 is part of the active site.

It belongs to the MurB family. Requires FAD as cofactor.

It localises to the cytoplasm. The enzyme catalyses UDP-N-acetyl-alpha-D-muramate + NADP(+) = UDP-N-acetyl-3-O-(1-carboxyvinyl)-alpha-D-glucosamine + NADPH + H(+). The protein operates within cell wall biogenesis; peptidoglycan biosynthesis. In terms of biological role, cell wall formation. This is UDP-N-acetylenolpyruvoylglucosamine reductase from Jannaschia sp. (strain CCS1).